Here is a 614-residue protein sequence, read N- to C-terminus: Vitamin B12 transporter BtuB (614 aa).

The first 20 residues, 1–20 (MIKKATLLTAFSVTAFSAWA), serve as a signal peptide directing secretion. A TonB box motif is present at residues 26 to 33 (DTLVVTAN). Residues 38–152 (PRSAVLAPVT…IGGVVNIITT (115 aa)) form the TBDR plug domain. Residues Ser85, Asn92, and 110–111 (VS) each bind cyanocob(III)alamin. The TBDR beta-barrel domain maps to 155 to 614 (NPGTELTAGW…EYTLSGSYTF (460 aa)). 3 beta stranded membrane passes run 158–165 (TELTAGWG), 169–178 (YQNYDISTQQ), and 184–195 (TRATLIGDYEYT). Ca(2+) is bound by residues Asp199, Gln211, Asp213, and Asp215. 2 consecutive transmembrane segments (beta stranded) span residues 217-227 (FLSKTLYGALE) and 232-248 (DRWS…NRTD). Tyr249 and Asp250 together coordinate Ca(2+). Ala251 serves as a coordination point for cyanocob(III)alamin. Asp261 provides a ligand contact to Ca(2+). The next 14 membrane-spanning stretches (beta stranded) occupy residues 263-277 (RKLY…LRFN), 279-296 (ERIQ…KDYN), 309-325 (TLDE…NSVV), 328-337 (HGNVGAGVDW), 353-369 (YDQR…QQLG), 371-381 (FTLEAAARSDD), 385-400 (FGRH…WEFI), 403-417 (YRFI…KAPN), 434-443 (KSKQWEGAFE), 449-458 (VSWRISGYRN), 473-490 (YYNE…TANF), 494-509 (PLTH…ARNA), 517-529 (RRSK…QLDW), and 535-550 (DWGV…YDSD). Thr309 serves as a coordination point for cyanocob(III)alamin. Residue Arg517 coordinates cyanocob(III)alamin. Tyr551 serves as a coordination point for cyanocob(III)alamin. Transmembrane regions (beta stranded) follow at residues 558–572 (TVKM…LTVA), 585–596 (IANLFDKDYETV), and 602–614 (AGRE…SYTF). The short motif at 597-614 (YGYQTAGREYTLSGSYTF) is the TonB C-terminal box element.

The protein belongs to the TonB-dependent receptor family. BtuB (TC 1.B.14.3.1) subfamily.

The protein localises to the cell outer membrane. Involved in the active translocation of vitamin B12 (cyanocobalamin) across the outer membrane to the periplasmic space. It derives its energy for transport by interacting with the trans-periplasmic membrane protein TonB. This is Vitamin B12 transporter BtuB from Salmonella choleraesuis (strain SC-B67).